A 601-amino-acid chain; its full sequence is Serine/threonine-protein phosphatase 2A 65 kDa regulatory subunit A beta isoform (601 aa).

The residue at position 2 (Ala-2) is an N-acetylalanine. HEAT repeat units follow at residues 20-58 (DSLYPIAVLIDELRNEDVQLRLNSIKKLSTIALALGVER), 59-96 (TRTELLPFLTDTIYDEDEVLLALAEQLGNFTGLVGGPD), 97-135 (FAHCLLPPLESLATVEETVVRDKAVESLRQISQEHTPVA), 136-173 (LEAHFVPLVKRLASGDWFTSRTSACGLFSVCYPRASNA), 174-212 (VKAEIRQHFRSLCSDDTPMVRRAAASKLGEFAKVLELDS), 213-251 (VKTEIVPLFTNLASDEQDSVRLLAVEACVSIAQLLSQED), 252-290 (LEALVMPTLRQAAEDKSWRVRYMVADKFSELQKAVGPKI), 291-333 (ALSD…RETV), 334-372 (IMNQILPYIKELVSDTNQHVKSALASVIMGLSTVLGKEN), 373-411 (TIEHLLPLFLAQLKDECPEVRLNIISNLDCVNEVIGIRQ), 412-450 (LSQSLLPAIVELAEDAKWRVRLAIIEYMPLLAGQLGVEF), 451-489 (FDEKLNSLCMAWLVDHVYAIREAATNNLMKLVQKFGTEW), 490-528 (AQNTIVPKVLVMANDPNYLHRMTTLFCINALSEACGKEI), 529-567 (TTKQMLPIVLKMAGDQVANVRFNVAKSLQKIGPILDTNA), and 568-601 (LQGEVKPVLQKLGQDEDMDVKYFAQEAISVLALA).

Belongs to the phosphatase 2A regulatory subunit A family. PP2A consists of a common heterodimeric core enzyme, composed of a 36 kDa catalytic subunit (subunit C) and a 65 kDa constant regulatory subunit (PR65 or subunit A), that associates with a variety of regulatory subunits. Proteins that associate with the core dimer include three families of regulatory subunits B (the R2/B/PR55/B55, R3/B''/PR72/PR130/PR59 and R5/B'/B56 families), the 48 kDa variable regulatory subunit, viral proteins, and cell signaling molecules. Interacts with IPO9. Interacts with SGO1. Interacts with RAF1.

Its function is as follows. The PR65 subunit of protein phosphatase 2A serves as a scaffolding molecule to coordinate the assembly of the catalytic subunit and a variable regulatory B subunit. The polypeptide is Serine/threonine-protein phosphatase 2A 65 kDa regulatory subunit A beta isoform (Ppp2r1b) (Mus musculus (Mouse)).